Consider the following 111-residue polypeptide: Small ribosomal subunit protein bS16 (111 aa).

This sequence belongs to the bacterial ribosomal protein bS16 family.

The chain is Small ribosomal subunit protein bS16 from Rickettsia bellii (strain OSU 85-389).